We begin with the raw amino-acid sequence, 70 residues long: Putative membrane protein insertion efficiency factor (70 aa).

Belongs to the UPF0161 family.

It localises to the cell inner membrane. In terms of biological role, could be involved in insertion of integral membrane proteins into the membrane. The chain is Putative membrane protein insertion efficiency factor from Geobacter sp. (strain M21).